The chain runs to 103 residues: Cystatin-A1 (103 aa).

A Secondary area of contact motif is present at residues 51–55 (QVVAG).

Belongs to the cystatin family.

It is found in the cytoplasm. Functionally, this is an intracellular thiol proteinase inhibitor. The sequence is that of Cystatin-A1 from Sus scrofa (Pig).